Here is a 479-residue protein sequence, read N- to C-terminus: Muscarinic acetylcholine receptor M4 (479 aa).

The Extracellular segment spans residues 1 to 30 (MANFTPVNGSSANQSVRLVTTAHNHLETVE). Asn-8 and Asn-13 each carry an N-linked (GlcNAc...) asparagine glycan. A helical transmembrane segment spans residues 31–53 (MVFIATVTGSLSLVTVVGNILVM). The Cytoplasmic portion of the chain corresponds to 54-67 (LSIKVNRQLQTVNN). A helical membrane pass occupies residues 68-88 (YFLFSLACADLIIGAFSMNLY). At 89–105 (TLYIIKGYWPLGAVVCD) the chain is on the extracellular side. Residues Cys-104 and Cys-184 are joined by a disulfide bond. Residues 106 to 127 (LWLALDYVVSNASVMNLLIISF) form a helical membrane-spanning segment. The Cytoplasmic portion of the chain corresponds to 128–147 (DRYFCVTKPLTYPARRTTKM). Residues 148–170 (AGLMIAAAWVLSFVLWAPAILFW) form a helical membrane-spanning segment. The Extracellular segment spans residues 171 to 192 (QFVVGKRTVPDNQCFIQFLSNP). The helical transmembrane segment at 193–215 (AVTFGTAIAAFYLPVVIMTVLYI) threads the bilayer. Residues 216–401 (HISLASRSRV…AARERKVTRT (186 aa)) lie on the Cytoplasmic side of the membrane. Residues 271-334 (LEEAPPPALP…APTLQPRTLN (64 aa)) form a disordered region. The span at 274 to 285 (APPPALPPPPRP) shows a compositional bias: pro residues. The span at 293–303 (NESSSGSATQN) shows a compositional bias: polar residues. The span at 310–333 (TELSTTEAATTPALPAPTLQPRTL) shows a compositional bias: low complexity. The chain crosses the membrane as a helical span at residues 402–422 (IFAILLAFILTWTPYNVMVLV). At 423-436 (NTFCQSCIPERVWS) the chain is on the extracellular side. Residues 437-456 (IGYWLCYVNSTINPACYALC) traverse the membrane as a helical segment. The Cytoplasmic portion of the chain corresponds to 457 to 479 (NATFKKTFRHLLLCQYRNIGTAR). 3 positions are modified to phosphothreonine: Thr-459, Thr-463, and Thr-477.

It belongs to the G-protein coupled receptor 1 family. Muscarinic acetylcholine receptor subfamily. CHRM4 sub-subfamily.

The protein resides in the cell membrane. Its subcellular location is the postsynaptic cell membrane. The muscarinic acetylcholine receptor mediates various cellular responses, including inhibition of adenylate cyclase, breakdown of phosphoinositides and modulation of potassium channels through the action of G proteins. Primary transducing effect is inhibition of adenylate cyclase. In Mus musculus (Mouse), this protein is Muscarinic acetylcholine receptor M4 (Chrm4).